The primary structure comprises 1297 residues: Phosphoribosylformylglycinamidine synthase (1297 aa).

ATP contacts are provided by residues glycine 307–aspartate 318 and alanine 678. 3 residues coordinate Mg(2+): glutamate 718, asparagine 722, and aspartate 886. The Glutamine amidotransferase type-1 domain maps to methionine 1044–glycine 1297. Catalysis depends on cysteine 1137, which acts as the Nucleophile. Residues histidine 1262 and glutamate 1264 contribute to the active site.

The protein in the N-terminal section; belongs to the FGAMS family. As to quaternary structure, monomer.

Its subcellular location is the cytoplasm. The enzyme catalyses N(2)-formyl-N(1)-(5-phospho-beta-D-ribosyl)glycinamide + L-glutamine + ATP + H2O = 2-formamido-N(1)-(5-O-phospho-beta-D-ribosyl)acetamidine + L-glutamate + ADP + phosphate + H(+). The protein operates within purine metabolism; IMP biosynthesis via de novo pathway; 5-amino-1-(5-phospho-D-ribosyl)imidazole from N(2)-formyl-N(1)-(5-phospho-D-ribosyl)glycinamide: step 1/2. In terms of biological role, phosphoribosylformylglycinamidine synthase involved in the purines biosynthetic pathway. Catalyzes the ATP-dependent conversion of formylglycinamide ribonucleotide (FGAR) and glutamine to yield formylglycinamidine ribonucleotide (FGAM) and glutamate. In Vibrio vulnificus (strain CMCP6), this protein is Phosphoribosylformylglycinamidine synthase.